A 420-amino-acid polypeptide reads, in one-letter code: Gamma-glutamyl phosphate reductase (420 aa).

It belongs to the gamma-glutamyl phosphate reductase family.

The protein localises to the cytoplasm. It carries out the reaction L-glutamate 5-semialdehyde + phosphate + NADP(+) = L-glutamyl 5-phosphate + NADPH + H(+). Its pathway is amino-acid biosynthesis; L-proline biosynthesis; L-glutamate 5-semialdehyde from L-glutamate: step 2/2. Catalyzes the NADPH-dependent reduction of L-glutamate 5-phosphate into L-glutamate 5-semialdehyde and phosphate. The product spontaneously undergoes cyclization to form 1-pyrroline-5-carboxylate. This Cereibacter sphaeroides (strain ATCC 17023 / DSM 158 / JCM 6121 / CCUG 31486 / LMG 2827 / NBRC 12203 / NCIMB 8253 / ATH 2.4.1.) (Rhodobacter sphaeroides) protein is Gamma-glutamyl phosphate reductase.